The chain runs to 640 residues: 1-deoxy-D-xylulose-5-phosphate synthase (640 aa).

Residues His-79 and 120-122 each bind thiamine diphosphate; that span reads AHA. A Mg(2+)-binding site is contributed by Asp-151. Thiamine diphosphate-binding positions include 152–153, Asn-180, Tyr-287, and Glu-369; that span reads GS. Asn-180 is a binding site for Mg(2+).

It belongs to the transketolase family. DXPS subfamily. Homodimer. The cofactor is Mg(2+). It depends on thiamine diphosphate as a cofactor.

It catalyses the reaction D-glyceraldehyde 3-phosphate + pyruvate + H(+) = 1-deoxy-D-xylulose 5-phosphate + CO2. Its pathway is metabolic intermediate biosynthesis; 1-deoxy-D-xylulose 5-phosphate biosynthesis; 1-deoxy-D-xylulose 5-phosphate from D-glyceraldehyde 3-phosphate and pyruvate: step 1/1. Functionally, catalyzes the acyloin condensation reaction between C atoms 2 and 3 of pyruvate and glyceraldehyde 3-phosphate to yield 1-deoxy-D-xylulose-5-phosphate (DXP). This Hyphomonas neptunium (strain ATCC 15444) protein is 1-deoxy-D-xylulose-5-phosphate synthase.